Reading from the N-terminus, the 107-residue chain is U1-lycotoxin-Ls1b (107 aa).

The N-terminal stretch at Met-1–Ser-20 is a signal peptide. The propeptide occupies Glu-21 to Arg-41. 4 disulfides stabilise this stretch: Cys-44–Cys-59, Cys-51–Cys-68, Cys-58–Cys-86, and Cys-70–Cys-84.

The protein belongs to the neurotoxin 19 (CSTX) family. 04 (U1-Lctx) subfamily. As to expression, expressed by the venom gland.

The protein resides in the secreted. The chain is U1-lycotoxin-Ls1b from Lycosa singoriensis (Wolf spider).